The sequence spans 499 residues: Inosine-5'-monophosphate dehydrogenase (499 aa).

2 consecutive CBS domains span residues 106 to 165 and 169 to 225; these read IDRE…SDAV and MTDE…GSAA. NAD(+)-binding positions include D260 and 308–310; that span reads GIG. K(+) is bound by residues G310 and G312. Residue S313 coordinates IMP. Residue C315 coordinates K(+). Residue C315 is the Thioimidate intermediate of the active site. IMP-binding positions include 348–350, 371–372, and 395–399; these read DGG, GS, and YRGMG. The active-site Proton acceptor is R411. E425 contacts IMP. 3 residues coordinate K(+): E479, G480, and H481. The disordered stretch occupies residues 480-499; sequence GHPHDVMITDEAPNYSPQGE.

Belongs to the IMPDH/GMPR family. Homotetramer. K(+) serves as cofactor.

The enzyme catalyses IMP + NAD(+) + H2O = XMP + NADH + H(+). Its pathway is purine metabolism; XMP biosynthesis via de novo pathway; XMP from IMP: step 1/1. With respect to regulation, mycophenolic acid (MPA) is a non-competitive inhibitor that prevents formation of the closed enzyme conformation by binding to the same site as the amobile flap. In contrast, mizoribine monophosphate (MZP) is a competitive inhibitor that induces the closed conformation. MPA is a potent inhibitor of mammalian IMPDHs but a poor inhibitor of the bacterial enzymes. MZP is a more potent inhibitor of bacterial IMPDH. Its function is as follows. Catalyzes the conversion of inosine 5'-phosphate (IMP) to xanthosine 5'-phosphate (XMP), the first committed and rate-limiting step in the de novo synthesis of guanine nucleotides, and therefore plays an important role in the regulation of cell growth. The sequence is that of Inosine-5'-monophosphate dehydrogenase from Halobacterium salinarum (strain ATCC 700922 / JCM 11081 / NRC-1) (Halobacterium halobium).